Consider the following 511-residue polypeptide: Ribosome biogenesis protein YTM1 (511 aa).

Residues 9-112 (VKVVFVTRDE…EVSLSIEYIR (104 aa)) form a ubiquitin-like (UBL) domain region. A sufficient for interaction with ERB1 and association with 66S pre-ribosomes region spans residues 122-511 (SFSNPDWVAA…IQINNNPQSA (390 aa)). 7 WD repeats span residues 124 to 168 (SNPD…TGQL), 170 to 208 (GHNSAAKAVRWISNDQLVSGGSDRLLYLWNPDGKKYRRK), 248 to 287 (GHTAPINDLAVHAKTGKIISASADGSVGLWSTDYNDMPAI), 332 to 372 (GHSA…AVQS), 383 to 423 (TRST…QVAT), 429 to 470 (GHTN…SLHV), and 477 to 511 (TENNAVFGVDWKQNLGIVSGGQDNKIQINNNPQSA). The segment at 207–228 (RKEPGQVGKKELNYDSEEDSDE) is disordered. Residues 208 to 219 (KEPGQVGKKELN) show a composition bias toward basic and acidic residues.

The protein belongs to the WD repeat WDR12/YTM1 family. Component of the NOP7 complex, composed of ERB1, NOP7 and YTM1. The complex is held together by ERB1, which interacts with NOP7 via its N-terminal domain and with YTM1 via a high-affinity interaction between the seven-bladed beta-propeller domains of the 2 proteins. The NOP7 complex associates with the 66S pre-ribosome. Interacts (via UBL domain) with MDN1 (via VWFA/MIDAS domain).

It localises to the nucleus. The protein localises to the nucleolus. It is found in the nucleoplasm. Component of the NOP7 complex, which is required for maturation of the 25S and 5.8S ribosomal RNAs and formation of the 60S ribosome. The protein is Ribosome biogenesis protein YTM1 of Yarrowia lipolytica (strain CLIB 122 / E 150) (Yeast).